The following is a 506-amino-acid chain: MKEYRVYLERARSRQQDFLYPLIFREYIYGLAYSHNFNRSIFVENGGYDNKYTLLNVKRLITRMYQQNHLIISANDSNKNPFLGYNKNFYSQIISEGFAIVVEIPFFLQLSSSLEEAEIIKSYKNVRSIHSVFPFLEDKFTYLNYVSDIRIPYPIHLEILVQILRYWVKDVPFFHLLRLFLYHFCNWNCFIPTKKSISTFSKSNPRLFLFLYNFYVCEYESIFLFLRNKSYHLRLKSFSVFFERNFFYAKREHLVEVFSKDFSYTLPFFKDPNIHYVRYQGKCILASKNVPFLMNKWKYYFIHLWQCFFDVWSQPRTININQLSEHSFQLLGYFSNVRLNRSVVRSQMLQNTFLIEIVSKKLDIIVPIIPLIRSLAKAKFCNVLGHPISKPVWADSSDFDIIERFLRICRNLSHYYNGSSKKKSLYRIKYILRLSCIKTLACKHKSTVRAFLKRSGSEELLEEFFTEEEEILSLIFPRDSFTLHRFHRNRIWYLDILFSNDLVNDE.

This sequence belongs to the intron maturase 2 family. MatK subfamily.

It localises to the plastid. Its subcellular location is the chloroplast. Usually encoded in the trnK tRNA gene intron. Probably assists in splicing its own and other chloroplast group II introns. This Trifolium wormskioldii (Cows clover) protein is Maturase K.